The sequence spans 460 residues: Adenylosuccinate lyase (460 aa).

N(6)-(1,2-dicarboxyethyl)-AMP is bound by residues 15-16 (RY), 88-90 (NHD), and 120-121 (TS). The active-site Proton donor/acceptor is H169. Residue Q245 coordinates N(6)-(1,2-dicarboxyethyl)-AMP. S293 (proton donor/acceptor) is an active-site residue. N(6)-(1,2-dicarboxyethyl)-AMP contacts are provided by residues S294, 299-301 (KIN), N307, R333, and 338-342 (STVLR).

The protein belongs to the lyase 1 family. Adenylosuccinate lyase subfamily. Homotetramer. Residues from neighboring subunits contribute catalytic and substrate-binding residues to each active site.

The catalysed reaction is N(6)-(1,2-dicarboxyethyl)-AMP = fumarate + AMP. It catalyses the reaction (2S)-2-[5-amino-1-(5-phospho-beta-D-ribosyl)imidazole-4-carboxamido]succinate = 5-amino-1-(5-phospho-beta-D-ribosyl)imidazole-4-carboxamide + fumarate. It functions in the pathway purine metabolism; AMP biosynthesis via de novo pathway; AMP from IMP: step 2/2. It participates in purine metabolism; IMP biosynthesis via de novo pathway; 5-amino-1-(5-phospho-D-ribosyl)imidazole-4-carboxamide from 5-amino-1-(5-phospho-D-ribosyl)imidazole-4-carboxylate: step 2/2. Functionally, catalyzes two reactions in de novo purine nucleotide biosynthesis. Catalyzes the breakdown of 5-aminoimidazole- (N-succinylocarboxamide) ribotide (SAICAR or 2-[5-amino-1-(5-phospho-beta-D-ribosyl)imidazole-4-carboxamido]succinate) to 5-aminoimidazole-4-carboxamide ribotide (AICAR or 5-amino-1-(5-phospho-beta-D-ribosyl)imidazole-4-carboxamide) and fumarate, and of adenylosuccinate (ADS or N(6)-(1,2-dicarboxyethyl)-AMP) to adenosine monophosphate (AMP) and fumarate. This Buchnera aphidicola subsp. Baizongia pistaciae (strain Bp) protein is Adenylosuccinate lyase (purB).